The following is a 357-amino-acid chain: DnaJ homolog subfamily C member 25 (357 aa).

The helical transmembrane segment at 19–39 (WLLLAPLLLVPLLVRPAEALV) threads the bilayer. The J domain maps to 48–121 (DCYEVLGVSR…ETRKDYDYML (74 aa)). A run of 2 helical transmembrane segments spans residues 147–167 (VVIL…WWNS) and 241–261 (LLLF…AWYC).

It belongs to the DNAJC25 family.

The protein localises to the membrane. This chain is DnaJ homolog subfamily C member 25 (Dnajc25), found in Rattus norvegicus (Rat).